We begin with the raw amino-acid sequence, 129 residues long: Glycine cleavage system H protein (129 aa).

One can recognise a Lipoyl-binding domain in the interval 24 to 106; that stretch reads IAVIGITAYA…YGDGWLIKVR (83 aa). Residue K65 is modified to N6-lipoyllysine.

The protein belongs to the GcvH family. The glycine cleavage system is composed of four proteins: P, T, L and H. The cofactor is (R)-lipoate.

Its function is as follows. The glycine cleavage system catalyzes the degradation of glycine. The H protein shuttles the methylamine group of glycine from the P protein to the T protein. In Synechococcus sp. (strain JA-3-3Ab) (Cyanobacteria bacterium Yellowstone A-Prime), this protein is Glycine cleavage system H protein.